A 94-amino-acid chain; its full sequence is Small ribosomal subunit protein bS6 (94 aa).

The protein belongs to the bacterial ribosomal protein bS6 family.

Its function is as follows. Binds together with bS18 to 16S ribosomal RNA. This Alkaliphilus metalliredigens (strain QYMF) protein is Small ribosomal subunit protein bS6.